The following is a 471-amino-acid chain: Argininosuccinate lyase (471 aa).

Belongs to the lyase 1 family. Argininosuccinate lyase subfamily.

It is found in the cytoplasm. The enzyme catalyses 2-(N(omega)-L-arginino)succinate = fumarate + L-arginine. It participates in amino-acid biosynthesis; L-arginine biosynthesis; L-arginine from L-ornithine and carbamoyl phosphate: step 3/3. This chain is Argininosuccinate lyase, found in Ralstonia nicotianae (strain ATCC BAA-1114 / GMI1000) (Ralstonia solanacearum).